Reading from the N-terminus, the 136-residue chain is ATP synthase epsilon chain (136 aa).

The protein belongs to the ATPase epsilon chain family. In terms of assembly, F-type ATPases have 2 components, CF(1) - the catalytic core - and CF(0) - the membrane proton channel. CF(1) has five subunits: alpha(3), beta(3), gamma(1), delta(1), epsilon(1). CF(0) has three main subunits: a, b and c.

The protein localises to the cell inner membrane. Functionally, produces ATP from ADP in the presence of a proton gradient across the membrane. The sequence is that of ATP synthase epsilon chain from Hydrogenobaculum sp. (strain Y04AAS1).